The sequence spans 247 residues: NH(3)-dependent NAD(+) synthetase (247 aa).

Residue 29–36 coordinates ATP; the sequence is GISGGIDS. Position 35 (Asp35) interacts with Mg(2+). Arg120 provides a ligand contact to deamido-NAD(+). Thr140 contacts ATP. Glu145 lines the Mg(2+) pocket. Deamido-NAD(+)-binding residues include Lys153 and Asp160. Residues Lys169 and Ser191 each contribute to the ATP site. 237 to 238 lines the deamido-NAD(+) pocket; the sequence is HK.

The protein belongs to the NAD synthetase family. In terms of assembly, homodimer.

The enzyme catalyses deamido-NAD(+) + NH4(+) + ATP = AMP + diphosphate + NAD(+) + H(+). It functions in the pathway cofactor biosynthesis; NAD(+) biosynthesis; NAD(+) from deamido-NAD(+) (ammonia route): step 1/1. In terms of biological role, catalyzes the ATP-dependent amidation of deamido-NAD to form NAD. Uses ammonia as a nitrogen source. The polypeptide is NH(3)-dependent NAD(+) synthetase (Alkaliphilus metalliredigens (strain QYMF)).